A 232-amino-acid polypeptide reads, in one-letter code: Enolase-phosphatase E1 (232 aa).

It belongs to the HAD-like hydrolase superfamily. MasA/MtnC family. In terms of assembly, monomer. Mg(2+) serves as cofactor.

It carries out the reaction 5-methylsulfanyl-2,3-dioxopentyl phosphate + H2O = 1,2-dihydroxy-5-(methylsulfanyl)pent-1-en-3-one + phosphate. Its pathway is amino-acid biosynthesis; L-methionine biosynthesis via salvage pathway; L-methionine from S-methyl-5-thio-alpha-D-ribose 1-phosphate: step 3/6. It functions in the pathway amino-acid biosynthesis; L-methionine biosynthesis via salvage pathway; L-methionine from S-methyl-5-thio-alpha-D-ribose 1-phosphate: step 4/6. Functionally, bifunctional enzyme that catalyzes the enolization of 2,3-diketo-5-methylthiopentyl-1-phosphate (DK-MTP-1-P) into the intermediate 2-hydroxy-3-keto-5-methylthiopentenyl-1-phosphate (HK-MTPenyl-1-P), which is then dephosphorylated to form the acireductone 1,2-dihydroxy-3-keto-5-methylthiopentene (DHK-MTPene). The protein is Enolase-phosphatase E1 of Xanthomonas oryzae pv. oryzae (strain KACC10331 / KXO85).